We begin with the raw amino-acid sequence, 242 residues long: ATP synthase subunit a (242 aa).

Helical transmembrane passes span 31-51, 84-104, 114-134, 140-160, 189-209, and 210-230; these read IYML…FYNW, FIPL…LGMT, IIVT…VGFV, FLTL…MIVI, VIAS…IPLM, and VILI…FTIL.

Belongs to the ATPase A chain family. In terms of assembly, F-type ATPases have 2 components, CF(1) - the catalytic core - and CF(0) - the membrane proton channel. CF(1) has five subunits: alpha(3), beta(3), gamma(1), delta(1), epsilon(1). CF(0) has three main subunits: a(1), b(2) and c(9-12). The alpha and beta chains form an alternating ring which encloses part of the gamma chain. CF(1) is attached to CF(0) by a central stalk formed by the gamma and epsilon chains, while a peripheral stalk is formed by the delta and b chains.

It is found in the cell inner membrane. In terms of biological role, key component of the proton channel; it plays a direct role in the translocation of protons across the membrane. The polypeptide is ATP synthase subunit a (Rickettsia canadensis (strain McKiel)).